The chain runs to 270 residues: Acyl-[acyl-carrier-protein]--UDP-N-acetylglucosamine O-acyltransferase (270 aa).

It belongs to the transferase hexapeptide repeat family. LpxA subfamily. As to quaternary structure, homotrimer.

The protein localises to the cytoplasm. It carries out the reaction a (3R)-hydroxyacyl-[ACP] + UDP-N-acetyl-alpha-D-glucosamine = a UDP-3-O-[(3R)-3-hydroxyacyl]-N-acetyl-alpha-D-glucosamine + holo-[ACP]. It functions in the pathway glycolipid biosynthesis; lipid IV(A) biosynthesis; lipid IV(A) from (3R)-3-hydroxytetradecanoyl-[acyl-carrier-protein] and UDP-N-acetyl-alpha-D-glucosamine: step 1/6. Functionally, involved in the biosynthesis of lipid A, a phosphorylated glycolipid that anchors the lipopolysaccharide to the outer membrane of the cell. This Helicobacter pylori (strain P12) protein is Acyl-[acyl-carrier-protein]--UDP-N-acetylglucosamine O-acyltransferase.